The sequence spans 608 residues: MAGTLDLDKGCTVEELLRGCIEAFDDSGKVRDPQLVRMFLMMHPWYIPSSQLAAKLLHIYQQSRKDNSSSLQVKTCHLVRYWISAFPAEFDLNPELAEQIKELKALLDQEGNRRHSSLIDIENVPTYKWKRQVTQRNPVEQKKRKMSLLFDHLEPLELAAHLTYLEYRSFCKILFQDYHSFVTHGCTVDNPVLERFISLFNSVSQWVQLMILSKPTAPQRAGVITHFVHVAEELLHLQNFNTLMAVVGGLSHSSISRLKETHSHVSPETIKLWEGLTELVTATGNYGNYRRRLAACVGFRFPILGVHLKDLVALQLALPDWLDPARTRLNGAKMKQLFSILEELAMVTSLRPPVQANPDLLSLLMVSLDQYQTEDELYQLSLQREPRSKSSPTSPTTCTPPPRPPVLEEWTSAAKPKLDQAIMVEHIEKMVESVFRNFDVDGDGHISQEEFQIIRGNFPYLSAFGDLDQNQDGCISKEEMVSYFLRSSSMLGGRMGFVHNFHESNSLRPVACRHCKALILGIYKQGLKCRACGVNCHKQCKDRLSVECRRRAQSMSLEGSAPSPSPTHTHHRAFSFSLPRPGRRGSRPPEIREEEVQTVEDGVFDIHL.

One can recognise an N-terminal Ras-GEF domain in the interval 4–126 (TLDLDKGCTV…SLIDIENVPT (123 aa)). Residues serine 116, serine 117, and serine 147 each carry the phosphoserine modification. The region spanning 154–387 (EPLELAAHLT…YQLSLQREPR (234 aa)) is the Ras-GEF domain. The disordered stretch occupies residues 382–407 (LQREPRSKSSPTSPTTCTPPPRPPVL). 2 consecutive EF-hand domains span residues 426–461 (HIEKMVESVFRNFDVDGDGHISQEEFQIIRGNFPYL) and 463–490 (AFGDLDQNQDGCISKEEMVSYFLRSSSM). Positions 439, 441, 443, 445, 450, 468, 470, 472, 474, and 479 each coordinate Ca(2+). The segment at 498–548 (VHNFHESNSLRPVACRHCKALILGIYKQGLKCRACGVNCHKQCKDRLSVEC) adopts a Phorbol-ester/DAG-type zinc-finger fold. Residues serine 554 and serine 575 each carry the phosphoserine modification. Residues 556–591 (SLEGSAPSPSPTHTHHRAFSFSLPRPGRRGSRPPEI) form a disordered region.

The protein belongs to the RASGRP family. In terms of assembly, forms a signaling complex with RAP1 and BRAF. Interacts with RAP1. Interacts with F-actin.

It localises to the cytoplasm. It is found in the cytosol. The protein resides in the cell membrane. Its subcellular location is the synapse. The protein localises to the synaptosome. It localises to the cell projection. It is found in the ruffle membrane. Its function is as follows. Functions as a calcium- and DAG-regulated nucleotide exchange factor specifically activating Rap through the exchange of bound GDP for GTP. May also activate other GTPases such as RRAS, RRAS2, NRAS, KRAS but not HRAS. Functions in aggregation of platelets and adhesion of T-lymphocytes and neutrophils probably through inside-out integrin activation. May function in the muscarinic acetylcholine receptor M1/CHRM1 signaling pathway. The chain is RAS guanyl-releasing protein 2 (RASGRP2) from Bos taurus (Bovine).